Here is a 153-residue protein sequence, read N- to C-terminus: 6,7-dimethyl-8-ribityllumazine synthase (153 aa).

Residues Phe22, 56–58 (AFE), and 80–82 (AVI) each bind 5-amino-6-(D-ribitylamino)uracil. 85–86 (ST) contributes to the (2S)-2-hydroxy-3-oxobutyl phosphate binding site. His88 functions as the Proton donor in the catalytic mechanism. Phe113 serves as a coordination point for 5-amino-6-(D-ribitylamino)uracil. (2S)-2-hydroxy-3-oxobutyl phosphate is bound at residue Arg127.

The protein belongs to the DMRL synthase family.

The enzyme catalyses (2S)-2-hydroxy-3-oxobutyl phosphate + 5-amino-6-(D-ribitylamino)uracil = 6,7-dimethyl-8-(1-D-ribityl)lumazine + phosphate + 2 H2O + H(+). It participates in cofactor biosynthesis; riboflavin biosynthesis; riboflavin from 2-hydroxy-3-oxobutyl phosphate and 5-amino-6-(D-ribitylamino)uracil: step 1/2. In terms of biological role, catalyzes the formation of 6,7-dimethyl-8-ribityllumazine by condensation of 5-amino-6-(D-ribitylamino)uracil with 3,4-dihydroxy-2-butanone 4-phosphate. This is the penultimate step in the biosynthesis of riboflavin. The polypeptide is 6,7-dimethyl-8-ribityllumazine synthase (Clostridium botulinum (strain Eklund 17B / Type B)).